A 511-amino-acid polypeptide reads, in one-letter code: Exodeoxyribonuclease 7 large subunit (511 aa).

This sequence belongs to the XseA family. As to quaternary structure, heterooligomer composed of large and small subunits.

It is found in the cytoplasm. It carries out the reaction Exonucleolytic cleavage in either 5'- to 3'- or 3'- to 5'-direction to yield nucleoside 5'-phosphates.. Its function is as follows. Bidirectionally degrades single-stranded DNA into large acid-insoluble oligonucleotides, which are then degraded further into small acid-soluble oligonucleotides. This Brucella suis biovar 1 (strain 1330) protein is Exodeoxyribonuclease 7 large subunit.